The primary structure comprises 1365 residues: Patatin-like phospholipase domain-containing protein 6 (1365 aa).

At 1–50 the chain is on the lumenal side; the sequence is MGTSSHGLATNSSGAKVAERDGFQDVPAPGEGAAGRICGAQPVPFVPQVL. Asn11 carries an N-linked (GlcNAc...) asparagine glycan. The helical transmembrane segment at 51–71 threads the bilayer; that stretch reads GVMIGAGVAVVVTAVLILLVV. Topologically, residues 72–1365 are cytoplasmic; the sequence is RRLRVPKTPA…QEPPGSATDA (1294 aa). 186 to 313 serves as a coordination point for a nucleoside 3',5'-cyclic phosphate; it reads VLGHFEKPLF…VRVVQIIMVR (128 aa). Disordered stretches follow at residues 343–427 and 441–463; these read FPSP…RSDF and QEGA…PREQ. Ser345 bears the Phosphoserine mark. Residues 350-367 are compositionally biased toward polar residues; that stretch reads TRTSPVRGSKRMVSTSAT. Phosphothreonine is present on Thr352. 2 positions are modified to phosphoserine: Ser353 and Ser363. A compositionally biased stretch (pro residues) spans 375 to 389; the sequence is GRPPDPTGAPLPGPT. At Ser411 the chain carries Phosphoserine. The residue at position 455 (Thr455) is a Phosphothreonine. A nucleoside 3',5'-cyclic phosphate is bound by residues 502–624 and 620–740; these read ELAK…VAAR and TVAA…LSQK. Residues 971 to 1137 enclose the PNPLA domain; it reads LVLGGGGARG…INNLPADIAR (167 aa). A GXGXXG motif is present at residues 975-980; sequence GGGARG. The short motif at 1002 to 1006 is the GXSXG element; it reads GTSIG. Ser1004 acts as the Nucleophile in catalysis. The active-site Proton acceptor is the Asp1124. A DGA/G motif is present at residues 1124–1126; sequence DGG. The tract at residues 1296-1365 is disordered; sequence SYVSDGCADG…QEPPGSATDA (70 aa). A compositionally biased stretch (acidic residues) spans 1303–1319; it reads ADGEESDCLTEYEEDAG.

The protein belongs to the NTE family. In terms of processing, glycosylated.

Its subcellular location is the endoplasmic reticulum membrane. The catalysed reaction is a 1-acyl-sn-glycero-3-phosphocholine + H2O = sn-glycerol 3-phosphocholine + a fatty acid + H(+). The enzyme catalyses 1-hexadecanoyl-sn-glycero-3-phosphocholine + H2O = sn-glycerol 3-phosphocholine + hexadecanoate + H(+). It carries out the reaction 1-(9Z-octadecenoyl)-sn-glycero-3-phosphocholine + H2O = sn-glycerol 3-phosphocholine + (9Z)-octadecenoate + H(+). It catalyses the reaction 1-hexadecanoylglycerol + H2O = glycerol + hexadecanoate + H(+). The catalysed reaction is 2-hexadecanoylglycerol + H2O = glycerol + hexadecanoate + H(+). The enzyme catalyses 1-(9Z-octadecenoyl)-glycerol + H2O = glycerol + (9Z)-octadecenoate + H(+). It carries out the reaction 2-(9Z-octadecenoyl)-glycerol + H2O = glycerol + (9Z)-octadecenoate + H(+). It catalyses the reaction 2-(5Z,8Z,11Z,14Z-eicosatetraenoyl)-glycerol + H2O = glycerol + (5Z,8Z,11Z,14Z)-eicosatetraenoate + H(+). The catalysed reaction is 1-hexadecanoyl-sn-glycero-3-phosphate + H2O = sn-glycerol 3-phosphate + hexadecanoate + H(+). Inhibited by a series a OPs such as mipafox (MPX), phenyl saligenin phosphate (PSP), phenyl dipentyl phosphinate (PDPP), diisopropyl fluorophosphate and paraoxon. Its function is as follows. Phospholipase B that deacylates intracellular phosphatidylcholine (PtdCho), generating glycerophosphocholine (GroPtdCho). This deacylation occurs at both sn-2 and sn-1 positions of PtdCho. Catalyzes the hydrolysis of several naturally occurring membrane-associated lipids. Hydrolyzes lysophospholipids and monoacylglycerols, preferring the 1-acyl to the 2-acyl isomer. Does not catalyze hydrolysis of di- or triacylglycerols or fatty acid amides. The polypeptide is Patatin-like phospholipase domain-containing protein 6 (PNPLA6) (Pongo abelii (Sumatran orangutan)).